A 332-amino-acid polypeptide reads, in one-letter code: Ribosomal RNA small subunit methyltransferase C (332 aa).

Belongs to the methyltransferase superfamily. RsmC family. In terms of assembly, monomer.

The protein localises to the cytoplasm. It carries out the reaction guanosine(1207) in 16S rRNA + S-adenosyl-L-methionine = N(2)-methylguanosine(1207) in 16S rRNA + S-adenosyl-L-homocysteine + H(+). Functionally, specifically methylates the guanine in position 1207 of 16S rRNA in the 30S particle. The sequence is that of Ribosomal RNA small subunit methyltransferase C from Pseudomonas aeruginosa (strain LESB58).